We begin with the raw amino-acid sequence, 336 residues long: Flavonoid 4'-O-methyltransferase 3 (336 aa).

Positions 140 and 203 each coordinate S-adenosyl-L-methionine. The active-site Proton acceptor is the H241.

It belongs to the class I-like SAM-binding methyltransferase superfamily. Cation-independent O-methyltransferase family. As to quaternary structure, homodimer. Expressed in leaves.

It carries out the reaction scutellarein 7-methyl ether + S-adenosyl-L-methionine = ladanein + S-adenosyl-L-homocysteine + H(+). The catalysed reaction is cirsimaritin + S-adenosyl-L-methionine = salvigenin + S-adenosyl-L-homocysteine + H(+). The enzyme catalyses cirsiliol + S-adenosyl-L-methionine = eupatorin + S-adenosyl-L-homocysteine + H(+). It catalyses the reaction genkwanin + S-adenosyl-L-methionine = apigenin 4',7-dimethyl ether + S-adenosyl-L-homocysteine. It participates in flavonoid metabolism. Substrate inhibition by genkwanin (GENK) at concentrations above 2.5 mM. Its function is as follows. Flavonoid 4'-O-methyltransferase involved in the biosynthesis of polymethoxylated flavonoids natural products such as nevadensin and salvigenin, aroma compounds which contribute to the flavor of sweet basil, and exhibit pharmacological activities such as anti-allergic, anti-oxidant, antibacterial, anti-proliferative, and anti-inflammatory effects. Catalyzes S-adenosylmethionine-dependent regioselective 4'-O-methylation of flavonoids; active on various hydroxylated flavonoid substrates, including scutellarein-7-methyl ether (SCU7Me) and cirsimaritin (CIRM), and, with a lower efficiency, hispidulin, ladanein (LAD), cirsioliol (CIRL) and genkwanin (GENK). This is Flavonoid 4'-O-methyltransferase 3 from Ocimum basilicum (Sweet basil).